Here is a 534-residue protein sequence, read N- to C-terminus: Prolyl 4-hydroxylase subunit alpha-1 (534 aa).

A signal peptide spans 1-17 (MIWYILVVGILLPQSLA). N-linked (GlcNAc...) asparagine glycosylation is present at asparagine 113. The stretch at 205-238 (VSVLDYLSYAVYQQGDLDKALLLTKKLLELDPEH) is one TPR repeat. Positions 258 to 277 (ANKSSSDDQSDQKTTLKKKG) are disordered. A glycan (N-linked (GlcNAc...) asparagine) is linked at asparagine 259. The region spanning 411–519 (TAEELQVANY…KWVSNKWLHE (109 aa)) is the Fe2OG dioxygenase domain. Residues histidine 429, aspartate 431, and histidine 500 each coordinate Fe cation. Position 510 (lysine 510) interacts with 2-oxoglutarate.

It belongs to the P4HA family. In terms of assembly, heterotetramer of two alpha-1 chains and two beta chains (P4HB)(the beta chain is the multi-functional PDI), where P4HB plays the role of a structural subunit; this tetramer catalyzes the formation of 4-hydroxyproline in collagen. Requires Fe(2+) as cofactor. It depends on L-ascorbate as a cofactor.

The protein localises to the endoplasmic reticulum lumen. It catalyses the reaction L-prolyl-[collagen] + 2-oxoglutarate + O2 = trans-4-hydroxy-L-prolyl-[collagen] + succinate + CO2. In terms of biological role, catalyzes the post-translational formation of 4-hydroxyproline in -Xaa-Pro-Gly- sequences in collagens and other proteins. The protein is Prolyl 4-hydroxylase subunit alpha-1 (P4HA1) of Bos taurus (Bovine).